Reading from the N-terminus, the 704-residue chain is MTRLVDLDKVRNIGIMAHIDAGKTTTTERILYYTGRLHRMGEVHDGGATMDWMEQEKERGITITSAATTCFWIPKFGNYSGINHRINIIDTPGHVDFTVEVERSLRVLDGAVALFCAVGGVEPQSETVWRQANKYGVPRIAYVNKMDRTGANFFDTVKAIRERLGANPVPLQIPIGEGEIFAGFVDLIRMKGIIYNKDDGSTYNEVEIPHDLQNEARTWRINMLEAVSEVDDTLLEKYLNGEEITEQEVRSVLRKATLKVTIIPVLCGSSFKNKGVQFMLDAVVEYLASPVDVGAVEGHHPKTEESVSREPKDEEPFAGLAFKIATDPFVGKLTFFRVYSGVLKAGSYVLNTMTGKKERIGRILQMHSNKREDIDCVYAGDIAAAVGLKDVRTGDTICDESNPVVLEKMVFPEPVIEIAIEPKTKADNDKLGMSLAKLAEEDPTFKVKTDEETGQTLIAGMGELHLEILVDRLKREFKVEANVGKPQVAYRETIRKTVEFEGKFVRQSGGKGQFGLVVLKVEPLEEGKGYEFVDAIKGGVIPREYIPAVNAGVQQAMKNGVVAGFPMQDIKVTLLDGKYHEVDSSEMAFKIAGSIGFKGAAKKADPVLLEPIMKVEVVTPEEYLGDVMGDLSSRRGHIEGMGQRAGAQFVNSKVPLSAMFGYSTDLRSMSQGRANYSMEFECYREVPRSIAEAMQEKRVSRDLE.

Residues 8 to 291 (DKVRNIGIMA…AVVEYLASPV (284 aa)) form the tr-type G domain. GTP contacts are provided by residues 17–24 (AHIDAGKT), 90–94 (DTPGH), and 144–147 (NKMD).

This sequence belongs to the TRAFAC class translation factor GTPase superfamily. Classic translation factor GTPase family. EF-G/EF-2 subfamily.

Its subcellular location is the cytoplasm. In terms of biological role, catalyzes the GTP-dependent ribosomal translocation step during translation elongation. During this step, the ribosome changes from the pre-translocational (PRE) to the post-translocational (POST) state as the newly formed A-site-bound peptidyl-tRNA and P-site-bound deacylated tRNA move to the P and E sites, respectively. Catalyzes the coordinated movement of the two tRNA molecules, the mRNA and conformational changes in the ribosome. This is Elongation factor G from Chlorobium limicola (strain DSM 245 / NBRC 103803 / 6330).